The chain runs to 90 residues: DNA-binding protein HRm (90 aa).

It belongs to the bacterial histone-like protein family.

Functionally, histone-like DNA-binding protein which is capable of wrapping DNA to stabilize it, and thus to prevent its denaturation under extreme environmental conditions. This chain is DNA-binding protein HRm (hupB), found in Rhizobium meliloti (strain 1021) (Ensifer meliloti).